The following is a 637-amino-acid chain: 1,4-alpha-glucan branching enzyme GlgB (637 aa).

The active-site Nucleophile is the aspartate 307. The Proton donor role is filled by glutamate 361.

Belongs to the glycosyl hydrolase 13 family. GlgB subfamily. In terms of assembly, monomer.

It catalyses the reaction Transfers a segment of a (1-&gt;4)-alpha-D-glucan chain to a primary hydroxy group in a similar glucan chain.. The protein operates within glycan biosynthesis; glycogen biosynthesis. Catalyzes the formation of the alpha-1,6-glucosidic linkages in glycogen by scission of a 1,4-alpha-linked oligosaccharide from growing alpha-1,4-glucan chains and the subsequent attachment of the oligosaccharide to the alpha-1,6 position. The protein is 1,4-alpha-glucan branching enzyme GlgB of Oceanobacillus iheyensis (strain DSM 14371 / CIP 107618 / JCM 11309 / KCTC 3954 / HTE831).